Consider the following 247-residue polypeptide: UPF0309 protein Teth39_1980 (247 aa).

Residues 31–213 (IANSLLKEED…EAEIVFIMIK (183 aa)) enclose the SIS domain.

This sequence belongs to the UPF0309 family.

The sequence is that of UPF0309 protein Teth39_1980 from Thermoanaerobacter pseudethanolicus (strain ATCC 33223 / 39E) (Clostridium thermohydrosulfuricum).